Here is a 498-residue protein sequence, read N- to C-terminus: Cobyric acid synthase (498 aa).

Residues 257-447 (DLEIAVLRLP…LHGLLDNGPW (191 aa)) enclose the GATase cobBQ-type domain. C338 (nucleophile) is an active-site residue. H439 is an active-site residue.

Belongs to the CobB/CobQ family. CobQ subfamily.

It functions in the pathway cofactor biosynthesis; adenosylcobalamin biosynthesis. Its function is as follows. Catalyzes amidations at positions B, D, E, and G on adenosylcobyrinic A,C-diamide. NH(2) groups are provided by glutamine, and one molecule of ATP is hydrogenolyzed for each amidation. This Synechococcus sp. (strain CC9605) protein is Cobyric acid synthase.